The sequence spans 243 residues: Terpene cyclase dpmaB (243 aa).

The next 6 membrane-spanning stretches (helical) occupy residues 11–31 (PGYL…GLGW), 51–71 (ALMP…IYPF), 112–132 (LPFI…ALAL), 141–161 (AFSA…QLLS), 169–189 (SYFL…QDVL), and 207–227 (IWFV…LWYV).

This sequence belongs to the paxB family.

Its subcellular location is the membrane. Its pathway is secondary metabolite biosynthesis; terpenoid biosynthesis. In terms of biological role, terpene cyclase; part of the gene cluster that mediates the biosynthesis of the diterpenoid pyrones subglutinols A and B. The first step of the pathway is the synthesis of the alpha-pyrone moiety by the polyketide synthase dpmaA via condensation of one acetyl-CoA starter unit with 3 malonyl-CoA units and 2 methylations. The alpha-pyrone is then combined with geranylgeranyl pyrophosphate (GGPP) formed by the GGPP synthase dpmaD through the action of the prenyltransferase dpmaC to yield a linear alpha-pyrone diterpenoid. Subsequent steps in the diterpenoid pyrone biosynthetic pathway involve the decalin core formation, which is initiated by the epoxidation of the C10-C11 olefin by the FAD-dependent oxidoreductase dpmaE, and is followed by a cyclization cascade catalyzed by the terpene cyclase dpmaB. The dehydrogenase dpmaF is then involved in tetrahydrofuran (THF) ring formation at the C5 unit to complete the formation of subglutinols A and B. The sequence is that of Terpene cyclase dpmaB from Metarhizium anisopliae (Entomophthora anisopliae).